We begin with the raw amino-acid sequence, 592 residues long: MNLKTGRVLKISGPLVVAEGMEEANIYDVVKVGEKRLIGEIIEMREDRASIQVYEETAGLAPGDPVITTGEPLSVELGPGLIEAMFDGIQRPLNAIKAKAGDFITRGVEVHSLDRDRKWHFTPLKKVGDTVEAGDVIGIVQETSIVEHKIMVPYGIKGTIETIEEGDFTVVDTVAKVKDKDKVSDLIMMQKWPVRRGRPYGRKLNPVEPMITGQRVIDTFFPVTKGGTACVPGPFGSGKTVVQHQLAKWADAQIVVYIGCGERGNEMTDVLNEFPELKDPKTGEPLMKRTVLIANTSNMPVAAREASIYTGITIGEYFRDMGYSVALMADSTSRWAEALREMSGRLEEMPGDEGYPAYLGSRAADFYERAGKVLSLGSEGREGALTVIGAVSPPGGDLSEPVTQATLRIVKVFWGLDSQLAYRRHFPAINWLNSYSLYLEKISPWMDENVASDWTALRTRAMSLLQEEANLEEIVRLVGIDALSEKDRLKLEVAKSLREDYLQQNAFHEVDTYASLEKQYKMLKLVLFFYDETQRALNAGVYLKELLDLEVRDKIARAKYVSEESIENIDAIFNELSEVIDELISKGGIMNA.

Residue 233–240 participates in ATP binding; it reads GPFGSGKT.

Belongs to the ATPase alpha/beta chains family.

It catalyses the reaction ATP + H2O + 4 H(+)(in) = ADP + phosphate + 5 H(+)(out). In terms of biological role, produces ATP from ADP in the presence of a proton gradient across the membrane. The V-type alpha chain is a catalytic subunit. The sequence is that of V-type ATP synthase alpha chain from Clostridium botulinum (strain Okra / Type B1).